The primary structure comprises 405 residues: Cytoplasmic tRNA 2-thiolation protein 2 (405 aa).

This sequence belongs to the CTU2/NCS2 family.

It is found in the cytoplasm. Its pathway is tRNA modification; 5-methoxycarbonylmethyl-2-thiouridine-tRNA biosynthesis. Plays a central role in 2-thiolation of mcm(5)S(2)U at tRNA wobble positions of tRNA(Lys), tRNA(Glu) and tRNA(Gln). May act by forming a heterodimer with NCS6/CTU1 that ligates sulfur from thiocarboxylated URM1 onto the uridine of tRNAs at wobble position. This Drosophila persimilis (Fruit fly) protein is Cytoplasmic tRNA 2-thiolation protein 2.